The chain runs to 253 residues: Probable transcriptional regulatory protein Krad_3057 (253 aa).

Belongs to the TACO1 family.

The protein resides in the cytoplasm. This is Probable transcriptional regulatory protein Krad_3057 from Kineococcus radiotolerans (strain ATCC BAA-149 / DSM 14245 / SRS30216).